A 229-amino-acid polypeptide reads, in one-letter code: Urease accessory protein UreF (229 aa).

It belongs to the UreF family. UreD, UreF and UreG form a complex that acts as a GTP-hydrolysis-dependent molecular chaperone, activating the urease apoprotein by helping to assemble the nickel containing metallocenter of UreC. The UreE protein probably delivers the nickel.

Its subcellular location is the cytoplasm. In terms of biological role, required for maturation of urease via the functional incorporation of the urease nickel metallocenter. The sequence is that of Urease accessory protein UreF from Nostoc sp. (strain PCC 7120 / SAG 25.82 / UTEX 2576).